Here is a 468-residue protein sequence, read N- to C-terminus: Cysteine--tRNA ligase (468 aa).

Residue Cys27 coordinates Zn(2+). Positions 29-39 (PTVYNYFHIGN) match the 'HIGH' region motif. Residues Cys207, His232, and Glu236 each coordinate Zn(2+). Positions 264-268 (KMAKS) match the 'KMSKS' region motif. Lys267 is a binding site for ATP.

The protein belongs to the class-I aminoacyl-tRNA synthetase family. In terms of assembly, monomer. Zn(2+) serves as cofactor.

It localises to the cytoplasm. It carries out the reaction tRNA(Cys) + L-cysteine + ATP = L-cysteinyl-tRNA(Cys) + AMP + diphosphate. The protein is Cysteine--tRNA ligase of Acetivibrio thermocellus (strain ATCC 27405 / DSM 1237 / JCM 9322 / NBRC 103400 / NCIMB 10682 / NRRL B-4536 / VPI 7372) (Clostridium thermocellum).